Reading from the N-terminus, the 236-residue chain is (5-formylfuran-3-yl)methyl phosphate synthase (236 aa).

The Schiff-base intermediate with substrate role is filled by lysine 27. Residue lysine 85 is the Proton acceptor of the active site.

It belongs to the MfnB family.

The enzyme catalyses 2 D-glyceraldehyde 3-phosphate = 4-(hydroxymethyl)-2-furancarboxaldehyde phosphate + phosphate + 2 H2O. Its pathway is cofactor biosynthesis; methanofuran biosynthesis. Its function is as follows. Catalyzes the formation of 4-(hydroxymethyl)-2-furancarboxaldehyde phosphate (4-HFC-P) from two molecules of glyceraldehyde-3-P (GA-3-P). In Methanococcus maripaludis (strain C5 / ATCC BAA-1333), this protein is (5-formylfuran-3-yl)methyl phosphate synthase.